Here is a 115-residue protein sequence, read N- to C-terminus: NAD(P)H-quinone oxidoreductase subunit M (115 aa).

Belongs to the complex I NdhM subunit family. As to quaternary structure, NDH-1 can be composed of about 15 different subunits; different subcomplexes with different compositions have been identified which probably have different functions.

It is found in the cellular thylakoid membrane. The catalysed reaction is a plastoquinone + NADH + (n+1) H(+)(in) = a plastoquinol + NAD(+) + n H(+)(out). The enzyme catalyses a plastoquinone + NADPH + (n+1) H(+)(in) = a plastoquinol + NADP(+) + n H(+)(out). Its function is as follows. NDH-1 shuttles electrons from an unknown electron donor, via FMN and iron-sulfur (Fe-S) centers, to quinones in the respiratory and/or the photosynthetic chain. The immediate electron acceptor for the enzyme in this species is believed to be plastoquinone. Couples the redox reaction to proton translocation, and thus conserves the redox energy in a proton gradient. Cyanobacterial NDH-1 also plays a role in inorganic carbon-concentration. This Prochlorococcus marinus (strain MIT 9313) protein is NAD(P)H-quinone oxidoreductase subunit M.